Reading from the N-terminus, the 247-residue chain is Adenosine 5'-phosphosulfate reductase (247 aa).

Residues Cys133, Cys134, Cys216, and Cys219 each coordinate [4Fe-4S] cluster. Positions 222-247 are disordered; sequence KPAPGSDPRSGRWAGASKTECGLHAS. Cys242 functions as the Nucleophile; cysteine thiosulfonate intermediate in the catalytic mechanism.

Belongs to the PAPS reductase family. CysH subfamily. [4Fe-4S] cluster serves as cofactor.

It localises to the cytoplasm. The enzyme catalyses [thioredoxin]-disulfide + sulfite + AMP + 2 H(+) = adenosine 5'-phosphosulfate + [thioredoxin]-dithiol. The protein operates within sulfur metabolism; hydrogen sulfide biosynthesis; sulfite from sulfate. Catalyzes the formation of sulfite from adenosine 5'-phosphosulfate (APS) using thioredoxin as an electron donor. The sequence is that of Adenosine 5'-phosphosulfate reductase from Rhodococcus erythropolis (strain PR4 / NBRC 100887).